Consider the following 287-residue polypeptide: Rhodopsin (287 aa).

Residues 1–5 (VNGAA) lie on the Extracellular side of the membrane. The helical transmembrane segment at 6-30 (YAGLCAYMFLLILVGFPVNFLTLYV) threads the bilayer. Residues 31 to 42 (TLEHKKLRTPLN) lie on the Cytoplasmic side of the membrane. The helical transmembrane segment at 43 to 65 (YILLNLAVADLFMVLGGFTTTMY) threads the bilayer. Residues 66–79 (TSAHGYFVLGRLGC) are Extracellular-facing. Residues cysteine 79 and cysteine 156 are joined by a disulfide bond. Residues 80–102 (NVEGFFATLGGEIALWSLVVLAV) traverse the membrane as a helical segment. The 'Ionic lock' involved in activated form stabilization signature appears at 103–105 (ERW). Residues 103 to 121 (ERWIVVCKPISNFRFTEEH) are Cytoplasmic-facing. The chain crosses the membrane as a helical span at residues 122–142 (AIMGLGFNWVMASACAVPPLV). Residues 143-171 (GWSRYIPEGMQCSCGINYYTRSEGFNNES) lie on the Extracellular side of the membrane. A glycan (N-linked (GlcNAc...) asparagine) is linked at asparagine 169. A helical membrane pass occupies residues 172–193 (LVMKMLICHFLIPLFVIFFCYG). Over 194 to 221 (RMLCAVKEAAAAQQESETTQRAEREVSR) the chain is Cytoplasmic. The helical transmembrane segment at 222 to 243 (MVVIMVISFLVCWLPYASVAWY) threads the bilayer. Over 244–255 (IFCNQGSEFGPV) the chain is Extracellular. A helical membrane pass occupies residues 256–277 (FMTLPAFFAKSASIYNPLIYIC). Lysine 265 bears the N6-(retinylidene)lysine mark. Residues 278–287 (MNKHSRHCMI) are Cytoplasmic-facing.

The protein belongs to the G-protein coupled receptor 1 family. Opsin subfamily. Post-translationally, phosphorylated on some or all of the serine and threonine residues present in the C-terminal region. Contains one covalently linked retinal chromophore.

The protein localises to the membrane. It localises to the cell projection. The protein resides in the cilium. It is found in the photoreceptor outer segment. Photoreceptor required for image-forming vision at low light intensity. While most salt water fish species use retinal as chromophore, most freshwater fish use 3-dehydroretinal, or a mixture of retinal and 3-dehydroretinal. Light-induced isomerization of 11-cis to all-trans retinal triggers a conformational change that activates signaling via G-proteins. Subsequent receptor phosphorylation mediates displacement of the bound G-protein alpha subunit by arrestin and terminates signaling. This is Rhodopsin (rho) from Taurulus bubalis (Long-spined sea scorpion).